The following is a 713-amino-acid chain: Phospholipase A1 PLIP2, chloroplastic (713 aa).

Residues 1-32 constitute a chloroplast transit peptide; that stretch reads MDSLCLNSGLHGVIPAITAVGNGGCGGVVEVR. 2 disordered regions span residues 118–140 and 232–261; these read WKHE…DEEV and ALKA…EKNK. The span at 122–140 shows a compositional bias: acidic residues; sequence EEEDDDEVEDEDGDEDEEV. The short motif at 426–430 is the GXSXG element; it reads GHSLG. Catalysis depends on serine 428, which acts as the Acyl-ester intermediate. Catalysis depends on charge relay system residues aspartate 489 and histidine 608.

The protein belongs to the AB hydrolase superfamily. Lipase family.

The protein resides in the plastid. It localises to the chloroplast membrane. The protein localises to the chloroplast stroma. It carries out the reaction a 1,2-diacyl-3-O-(beta-D-galactosyl)-sn-glycerol + 2 H2O = 3-beta-D-galactosyl-sn-glycerol + 2 a fatty acid + 2 H(+). It catalyses the reaction a 1,2-diacyl-sn-glycero-3-phosphocholine + H2O = a 2-acyl-sn-glycero-3-phosphocholine + a fatty acid + H(+). The catalysed reaction is 1-hexadecanoyl-2-(9Z-octadecenoyl)-sn-glycero-3-phosphocholine + H2O = 2-(9Z-octadecenoyl)-sn-glycero-3-phosphocholine + hexadecanoate + H(+). The enzyme catalyses 1,2-di-(9Z-octadecenoyl)-sn-glycero-3-phosphocholine + H2O = 2-(9Z-octadecenoyl)-sn-glycero-3-phosphocholine + (9Z)-octadecenoate + H(+). It carries out the reaction 1-octadecanoyl-2-(9Z-octadecenoyl)-sn-glycero-3-phosphocholine + H2O = 2-(9Z-octadecenoyl)-sn-glycero-3-phosphocholine + octadecanoate + H(+). It catalyses the reaction 1-octadecanoyl-2-(9Z,12Z)-octadecadienoyl-sn-glycero-3-phosphocholine + H2O = 2-(9Z,12Z-octadecadienoyl)-sn-glycero-3-phosphocholine + octadecanoate + H(+). The catalysed reaction is 1,2-di-(9Z,12Z-octadecadienoyl)-sn-glycero-3-phosphocholine + H2O = 2-(9Z,12Z-octadecadienoyl)-sn-glycero-3-phosphocholine + (9Z,12Z)-octadecadienoate + H(+). The enzyme catalyses 1-(9Z-octadecenoyl)-2-hexadecanoyl-sn-glycero-3-phosphocholine + H2O = 2-hexadecanoyl-sn-glycero-3-phosphocholine + (9Z)-octadecenoate + H(+). Functionally, sn-1-specific phospholipase A1 that catalyzes the initial step of oxylipins and jasmonate (JA) biosynthesis. Hydrolyzes polyunsaturated acyl groups preferentially from chloroplastic monogalactosyldiacylglycerol (MGDG). May function downstream of abscisic acid (ABA) and provide a link between ABA-mediated abiotic stress responses and oxylipin and JA signalings. In vitro, possesses broad substrate specificity. Can hydrolyze the galactolipids monogalactosyldiacylglycerol (MGDG) and digalactosyldiacylglycerol (DGDG), the sulfolipid sulfoquinovosyldiacylglycerol (SQDG), and the phoshpolipids phosphatidylcholine (PC), and phosphatidylglycerol (PG). This Arabidopsis thaliana (Mouse-ear cress) protein is Phospholipase A1 PLIP2, chloroplastic.